A 145-amino-acid chain; its full sequence is Small ribosomal subunit protein eS12A (145 aa).

The protein belongs to the eukaryotic ribosomal protein eS12 family. As to quaternary structure, component of the small ribosomal subunit (SSU). Mature yeast ribosomes consist of a small (40S) and a large (60S) subunit. The 40S small subunit contains 1 molecule of ribosomal RNA (18S rRNA) and at least 33 different proteins. The large 60S subunit contains 3 rRNA molecules (25S, 5.8S and 5S rRNA) and at least 46 different proteins.

Its subcellular location is the cytoplasm. Its function is as follows. Component of the ribosome, a large ribonucleoprotein complex responsible for the synthesis of proteins in the cell. The small ribosomal subunit (SSU) binds messenger RNAs (mRNAs) and translates the encoded message by selecting cognate aminoacyl-transfer RNA (tRNA) molecules. The large subunit (LSU) contains the ribosomal catalytic site termed the peptidyl transferase center (PTC), which catalyzes the formation of peptide bonds, thereby polymerizing the amino acids delivered by tRNAs into a polypeptide chain. The nascent polypeptides leave the ribosome through a tunnel in the LSU and interact with protein factors that function in enzymatic processing, targeting, and the membrane insertion of nascent chains at the exit of the ribosomal tunnel. In Schizosaccharomyces pombe (strain 972 / ATCC 24843) (Fission yeast), this protein is Small ribosomal subunit protein eS12A (rps1201).